Consider the following 206-residue polypeptide: Large ribosomal subunit protein uL4 (206 aa).

The segment at 44-77 (RQGTRAQKDRQTVKHSTKKPWRQKGTGRARAGMT) is disordered. The span at 56–70 (VKHSTKKPWRQKGTG) shows a compositional bias: basic residues.

This sequence belongs to the universal ribosomal protein uL4 family. Part of the 50S ribosomal subunit.

One of the primary rRNA binding proteins, this protein initially binds near the 5'-end of the 23S rRNA. It is important during the early stages of 50S assembly. It makes multiple contacts with different domains of the 23S rRNA in the assembled 50S subunit and ribosome. Functionally, forms part of the polypeptide exit tunnel. The protein is Large ribosomal subunit protein uL4 of Methylibium petroleiphilum (strain ATCC BAA-1232 / LMG 22953 / PM1).